A 388-amino-acid polypeptide reads, in one-letter code: Succinate--CoA ligase [ADP-forming] subunit beta (388 aa).

The region spanning 9-244 is the ATP-grasp domain; sequence KQLFARYGMP…KSQEDEREAQ (236 aa). ATP-binding positions include K46, 53 to 55, E99, T102, and E107; that span reads GRG. The Mg(2+) site is built by N199 and D213. Substrate is bound by residues N264 and 321–323; that span reads GIV.

The protein belongs to the succinate/malate CoA ligase beta subunit family. In terms of assembly, heterotetramer of two alpha and two beta subunits. Mg(2+) serves as cofactor.

It catalyses the reaction succinate + ATP + CoA = succinyl-CoA + ADP + phosphate. It carries out the reaction GTP + succinate + CoA = succinyl-CoA + GDP + phosphate. Its pathway is carbohydrate metabolism; tricarboxylic acid cycle; succinate from succinyl-CoA (ligase route): step 1/1. Succinyl-CoA synthetase functions in the citric acid cycle (TCA), coupling the hydrolysis of succinyl-CoA to the synthesis of either ATP or GTP and thus represents the only step of substrate-level phosphorylation in the TCA. The beta subunit provides nucleotide specificity of the enzyme and binds the substrate succinate, while the binding sites for coenzyme A and phosphate are found in the alpha subunit. This chain is Succinate--CoA ligase [ADP-forming] subunit beta, found in Yersinia enterocolitica serotype O:8 / biotype 1B (strain NCTC 13174 / 8081).